The sequence spans 352 residues: Inhibin beta C chain (352 aa).

Positions 1-18 (MTSSLLLAFLLLAPTTVA) are cleaved as a signal peptide. Positions 19 to 236 (TPRAGGQCPA…VGGKHQIHRR (218 aa)) are excised as a propeptide. N-linked (GlcNAc...) asparagine glycosylation is found at N110, N143, and N161. Cystine bridges form between C240–C248, C247–C317, C276–C349, and C280–C351.

It belongs to the TGF-beta family. Homodimeric or heterodimeric through association with alpha and beta subunits, linked by one or more disulfide bonds. Inhibins are heterodimers of one alpha and one beta subunit. Activins are homo- or heterodimers of beta subunits only. In terms of tissue distribution, expressed in benign prostatic hyperplasia.

It is found in the secreted. Its function is as follows. Inhibins and activins inhibit and activate, respectively, the secretion of follitropin by the pituitary gland. Inhibins/activins are involved in regulating a number of diverse functions such as hypothalamic and pituitary hormone secretion, gonadal hormone secretion, germ cell development and maturation, erythroid differentiation, insulin secretion, nerve cell survival, embryonic axial development or bone growth, depending on their subunit composition. Inhibins appear to oppose the functions of activins. The protein is Inhibin beta C chain (INHBC) of Homo sapiens (Human).